The primary structure comprises 181 residues: Inner membrane-spanning protein YciB (181 aa).

5 consecutive transmembrane segments (helical) span residues 10–30 (LVIF…GALI), 50–70 (MHLI…VFHD), 72–92 (AFIK…LGVS), 118–138 (VTWY…YVAF), and 148–168 (FKVF…VFYL).

It belongs to the YciB family.

The protein localises to the cell inner membrane. Plays a role in cell envelope biogenesis, maintenance of cell envelope integrity and membrane homeostasis. The polypeptide is Inner membrane-spanning protein YciB (Shewanella oneidensis (strain ATCC 700550 / JCM 31522 / CIP 106686 / LMG 19005 / NCIMB 14063 / MR-1)).